Reading from the N-terminus, the 111-residue chain is Universal stress protein B (111 aa).

Transmembrane regions (helical) follow at residues 1 to 21 (MIST…NMAR) and 90 to 110 (FLLT…LMIW).

This sequence belongs to the universal stress protein B family.

It is found in the cell inner membrane. This chain is Universal stress protein B, found in Salmonella arizonae (strain ATCC BAA-731 / CDC346-86 / RSK2980).